The primary structure comprises 368 residues: Putative transport protein bbp_117 (368 aa).

8 helical membrane-spanning segments follow: residues 13 to 35, 39 to 61, 68 to 90, 159 to 181, 216 to 238, 248 to 270, 277 to 299, and 314 to 336; these read VIFS…RPFF, AWAS…LLWG, VMMT…NSLI, HFGR…YWNG, LGVV…ISGI, IIIF…IWLY, WGTV…RPIL, and GVIG…VLII.

The protein belongs to the autoinducer-2 exporter (AI-2E) (TC 2.A.86) family.

Its subcellular location is the cell membrane. The polypeptide is Putative transport protein bbp_117 (Buchnera aphidicola subsp. Baizongia pistaciae (strain Bp)).